The chain runs to 216 residues: Pyrophosphatase PpaX (216 aa).

The active-site Nucleophile is Asp9.

It belongs to the HAD-like hydrolase superfamily. PpaX family. Requires Mg(2+) as cofactor.

The catalysed reaction is diphosphate + H2O = 2 phosphate + H(+). Hydrolyzes pyrophosphate formed during P-Ser-HPr dephosphorylation by HPrK/P. Might play a role in controlling the intracellular pyrophosphate pool. The sequence is that of Pyrophosphatase PpaX from Bacillus cereus (strain AH820).